A 141-amino-acid chain; its full sequence is Mite group 2 allergen Tyr p 2 (141 aa).

The first 15 residues, Met-1 to Ala-15, serve as a signal peptide directing secretion. Intrachain disulfides connect Cys-23–Cys-132, Cys-36–Cys-41, and Cys-87–Cys-92. N-linked (GlcNAc...) asparagine glycosylation occurs at Asn-103.

This sequence belongs to the NPC2 family.

Its subcellular location is the secreted. The polypeptide is Mite group 2 allergen Tyr p 2 (Tyrophagus putrescentiae (Mold mite)).